The sequence spans 1714 residues: Intersectin-1 (1714 aa).

The 89-residue stretch at 21-109 folds into the EH 1 domain; the sequence is ERAKHDQQFL…PVMKQQPVAI (89 aa). The region spanning 53 to 88 is the EF-hand 1 domain; it reads LPQPVLAQIWALADMNNDGRMDQVEFSIAMKLIKLK. Asp-66, Asn-68, Asp-70, Arg-72, and Glu-77 together coordinate Ca(2+). Residue Ser-203 is modified to Phosphoserine. Positions 221-310 constitute an EH 2 domain; sequence SRLKYRQLFN…PEYIPPSFRR (90 aa). One can recognise an EF-hand 2 domain in the interval 254-289; it reads LPQAQLASIWNLSDIDQDGKLTAEEFILAMHLIDVA. Ca(2+) contacts are provided by Asp-267, Asp-269, Asp-271, Lys-273, and Glu-278. The span at 310–325 shows a compositional bias: low complexity; that stretch reads RVRSGSGMSVISSSSV. Disordered stretches follow at residues 310–356 and 614–706; these read RVRS…KREN and SKQQ…QSRL. Residues Ser-318, Ser-334, and Ser-335 each carry the phosphoserine modification. Positions 326–702 are KLERQ; sequence DQRLPEEPSS…ERAKPEMQDK (377 aa). 2 stretches are compositionally biased toward basic and acidic residues: residues 340 to 356 and 622 to 706; these read QPEKKLPVTFEDKKREN and RSLE…QSRL. The stretch at 354–658 forms a coiled coil; the sequence is RENFERGSVE…QRRVQERDKQ (305 aa). Ser-685 carries the phosphoserine modification. Residues 738–799 form the SH3 1 domain; it reads VKVVYYRALY…PANYAEKIPE (62 aa). Residues 827 to 863 form a disordered region; that stretch reads APLPVTSSEPSTTPNNWADFSSTWPSSSNEKPETDNW. Positions 831–855 are enriched in polar residues; the sequence is VTSSEPSTTPNNWADFSSTWPSSSN. Phosphothreonine is present on Thr-890. Phosphoserine is present on residues Ser-894, Ser-895, and Ser-897. The SH3 2 domain occupies 906-964; sequence VEGLQAQALYPWRAKKDNHLNFNKSDVITVLEQQDMWWFGEVQGQKGWFPKSYVKLISG. Residue Ser-971 is modified to Phosphoserine. A Phosphothreonine modification is found at Thr-977. A phosphoserine mark is found at Ser-979 and Ser-988. SH3 domains follow at residues 995 to 1053 and 1067 to 1131; these read IPGE…LKDS and KKPE…LLSP. A required for interaction with FCHSD2 region spans residues 1067 to 1131; that stretch reads KKPEIAQVIA…PANYVKLLSP (65 aa). A Bipartite nuclear localization signal; in isoform 2 motif is present at residues 1097–1120; the sequence is RKKNPGGWWEGELQARGKKRQIGW. Ser-1130 carries the post-translational modification Phosphoserine. Thr-1137 is subject to Phosphothreonine. One can recognise an SH3 5 domain in the interval 1148–1207; it reads PAVCQVIGMYDYTAQNDDELAFSKGQIINVLNKEDPDWWKGEVSGQVGLFPSNYVKLTTD. In terms of domain architecture, DH spans 1230–1416; the sequence is KRQGYIHELI…EELCSQVNEG (187 aa). Residues 1455–1564 enclose the PH domain; it reads KFLHSGKLYK…WVQKIKAASE (110 aa). A C2 domain is found at 1572–1688; the sequence is KKREKAYLVR…KKDQGSKGPV (117 aa). Ser-1638 is subject to Phosphoserine. Positions 1660, 1663, and 1666 each coordinate Ca(2+).

In terms of assembly, interacts (via DH domain) with CDC42. Interacts (via SH3 domain 1) with WASL. Interacts with dynamin, SNAP25 and SNAP23. Interacts with clathrin-associated proteins and other components of the endocytic machinery, such as SPIN90, EPS15, EPN1, EPN2, STON2, FCHO1, FCHO2 and DAB2. Interacts (via SH3 domains) with REPS1 and SGIP1. Interacts with ARHGAP31. Interacts with ADAM15. Interacts with PRRT2. Interacts (via SH3 domain 4) with FCHSD2 (via SH3 domain 2). Interacts (via SH3 domain 1) with DENND2B. Interacts (via SH3 domains) with CBL. Isoform 2: Interacts with CBL and DNM1. Isoform 2: Interacts with LMNA. Isoform 2: Interacts with importin subunit KPNA1; this is likely to mediate its import into the nucleus. Interacts with DNM2. Ca(2+) is required as a cofactor. As to expression, detected in brain, adrenal gland and heart. Detected in neurons at the calyx of Held (at protein level). Isoform 1: Primarily detected in brain neurons. Isoform 2: Primarily detected in glia (at protein level). Widely expressed. Expressed at high levels in brain, heart and skeletal muscle.

It is found in the endomembrane system. The protein resides in the synapse. Its subcellular location is the synaptosome. The protein localises to the cell projection. It localises to the lamellipodium. It is found in the cell membrane. The protein resides in the membrane. Its subcellular location is the clathrin-coated pit. The protein localises to the recycling endosome. It localises to the endosome. It is found in the cytoplasmic vesicle. The protein resides in the cytoplasm. Its subcellular location is the nucleus envelope. In terms of biological role, adapter protein that provides a link between the endocytic membrane traffic and the actin assembly machinery. Acts as a guanine nucleotide exchange factor (GEF) for CDC42, and thereby stimulates actin nucleation mediated by WASL and the ARP2/3 complex. Plays a role in the assembly and maturation of clathrin-coated vesicles. Recruits FCHSD2 to clathrin-coated pits. Involved in endocytosis of activated EGFR, and probably also other growth factor receptors. Involved in endocytosis of integrin beta-1 (ITGB1) and transferrin receptor (TFR); internalization of ITGB1 as DAB2-dependent cargo but not TFR may involve association with DAB2. Promotes ubiquitination and subsequent degradation of EGFR, and thereby contributes to the down-regulation of EGFR-dependent signaling pathways. In chromaffin cells, required for normal exocytosis of catecholamines. Required for rapid replenishment of release-ready synaptic vesicles at presynaptic active zones. Inhibits ARHGAP31 activity toward RAC1. Plays a role in synaptic vesicle endocytosis in brain neurons. In Mus musculus (Mouse), this protein is Intersectin-1.